Here is a 307-residue protein sequence, read N- to C-terminus: Probable acetylxylan esterase A (307 aa).

The signal sequence occupies residues 1 to 19; that stretch reads MILLSYLLTYLLCALTCSA. The active-site Charge relay system is Ser-150. N-linked (GlcNAc...) asparagine glycosylation is found at Asn-192 and Asn-270.

The protein belongs to the carbohydrate esterase 1 (CE1) family. AxeA subfamily. As to quaternary structure, monomer.

It is found in the secreted. It catalyses the reaction Deacetylation of xylans and xylo-oligosaccharides.. The protein operates within glycan degradation; xylan degradation. In terms of biological role, acetylxylan esterase involved in the hydrolysis of xylan, a major structural heterogeneous polysaccharide found in plant biomass representing the second most abundant polysaccharide in the biosphere, after cellulose. Degrades acetylated xylans by cleaving acetyl side groups from the hetero-xylan backbone. The chain is Probable acetylxylan esterase A (axeA) from Aspergillus flavus.